The chain runs to 177 residues: Large ribosomal subunit protein uL6 (177 aa).

Belongs to the universal ribosomal protein uL6 family. As to quaternary structure, part of the 50S ribosomal subunit.

Functionally, this protein binds to the 23S rRNA, and is important in its secondary structure. It is located near the subunit interface in the base of the L7/L12 stalk, and near the tRNA binding site of the peptidyltransferase center. The sequence is that of Large ribosomal subunit protein uL6 from Ectopseudomonas mendocina (strain ymp) (Pseudomonas mendocina).